We begin with the raw amino-acid sequence, 183 residues long: Capsid protein (183 aa).

The tract at residues 143-183 (LPETTVVRRRGRSPRRRTPSPRRRRSKSPRRRRSQSRESQC) is disordered. Over residues 149–176 (VRRRGRSPRRRTPSPRRRRSKSPRRRRS) the composition is skewed to basic residues. Phosphoserine; by host occurs at positions 155, 162, and 170. The 1; half-length repeat unit spans residues 155-160 (SPRRRT). The tract at residues 155–176 (SPRRRTPSPRRRRSKSPRRRRS) is 3 X 7 AA repeats of S-P-R-R-R-[PR]-S. The Bipartite nuclear localization signal signature appears at 158–175 (RRTPSPRRRRSKSPRRRR). 2 consecutive repeat copies span residues 162–168 (SPRRRRS) and 170–176 (SPRRRRS). Residues 177 to 183 (QSRESQC) are RNA binding.

It belongs to the orthohepadnavirus core antigen family. Homodimerizes, then multimerizes. Interacts with cytosol exposed regions of viral L glycoprotein present in the reticulum-to-Golgi compartment. Interacts with human FLNB. Phosphorylated form interacts with host importin alpha; this interaction depends on the exposure of the NLS, which itself depends upon genome maturation and/or phosphorylation of the capsid protein. Interacts with host NUP153. In terms of processing, phosphorylated by host SRPK1, SRPK2, and maybe protein kinase C or GAPDH. Phosphorylation is critical for pregenomic RNA packaging. Protein kinase C phosphorylation is stimulated by HBx protein and may play a role in transport of the viral genome to the nucleus at the late step during the viral replication cycle.

It localises to the virion. The protein localises to the host cytoplasm. Its function is as follows. Self assembles to form an icosahedral capsid. Most capsids appear to be large particles with an icosahedral symmetry of T=4 and consist of 240 copies of capsid protein, though a fraction forms smaller T=3 particles consisting of 180 capsid proteins. Entering capsids are transported along microtubules to the nucleus. Phosphorylation of the capsid is thought to induce exposure of nuclear localization signal in the C-terminal portion of the capsid protein that allows binding to the nuclear pore complex via the importin (karyopherin-) alpha and beta. Capsids are imported in intact form through the nuclear pore into the nuclear basket, where it probably binds NUP153. Only capsids that contain the mature viral genome can release the viral DNA and capsid protein into the nucleoplasm. Immature capsids get stuck in the basket. Capsids encapsulate the pre-genomic RNA and the P protein. Pre-genomic RNA is reverse-transcribed into DNA while the capsid is still in the cytoplasm. The capsid can then either be directed to the nucleus, providing more genomes for transcription, or bud through the endoplasmic reticulum to provide new virions. The polypeptide is Capsid protein (Homo sapiens (Human)).